Consider the following 656-residue polypeptide: Putative cysteine-rich receptor-like protein kinase 32 (656 aa).

Residues 1–23 (MCLQNLLSILCFVLAISFGYVSA) form the signal peptide. Gnk2-homologous domains follow at residues 24-126 (QKCV…NSSF) and 134-238 (PTMV…GSEY). At 24 to 262 (QKCVDSMFFR…PDGKTISTGA (239 aa)) the chain is on the extracellular side. 5 N-linked (GlcNAc...) asparagine glycosylation sites follow: asparagine 35, asparagine 52, asparagine 61, asparagine 103, and asparagine 123. The helical transmembrane segment at 263–283 (IVAVVVSVVIFVVLLALVLVI) threads the bilayer. At 284–656 (RKRRQSYKTL…SASITRVTPR (373 aa)) the chain is on the cytoplasmic side. A Protein kinase domain is found at 321 to 606 (FSRNNKLGKG…IFQMLTNSSI (286 aa)). ATP is bound by residues 327–335 (LGKGGFGEV) and lysine 349. Tyrosine 394 is modified (phosphotyrosine). Aspartate 454 (proton acceptor) is an active-site residue. Serine 458 is modified (phosphoserine). Threonine 494 bears the Phosphothreonine mark. Phosphotyrosine is present on tyrosine 502.

The protein belongs to the protein kinase superfamily. Ser/Thr protein kinase family. CRK subfamily.

The protein localises to the membrane. It carries out the reaction L-seryl-[protein] + ATP = O-phospho-L-seryl-[protein] + ADP + H(+). It catalyses the reaction L-threonyl-[protein] + ATP = O-phospho-L-threonyl-[protein] + ADP + H(+). The chain is Putative cysteine-rich receptor-like protein kinase 32 (CRK32) from Arabidopsis thaliana (Mouse-ear cress).